The sequence spans 228 residues: Ankyrin repeat domain-containing protein 46 (228 aa).

ANK repeat units lie at residues 11 to 40 (QTNVPLLQACIDGDFNYSKRLLESGFDPNI), 44 to 73 (RGRTGLHLAAARGNVDICQLLHKFGADLLA), 77 to 103 (QGNTALHLCGHVDTIQFLVSNGLKIDI), and 107 to 138 (QGATPLVLAKRRGVNKDVIRLLEFLEEQEVKG). Residues 195–215 (VLLLIFVIALLSLGIAYYVSG) form a helical membrane-spanning segment.

It localises to the membrane. The polypeptide is Ankyrin repeat domain-containing protein 46 (ANKRD46) (Pongo abelii (Sumatran orangutan)).